The following is a 303-amino-acid chain: uncharacterized protein (303 aa).

The S4 RNA-binding domain maps to 15 to 74; the sequence is ERIDKFLASTENDWSRTQVQQWVKDGQVVVNGSAVKANYKIQPGDQVTVTVPEPEALDVL. Residue aspartate 138 is part of the active site.

This sequence belongs to the pseudouridine synthase RluA family.

The enzyme catalyses a uridine in RNA = a pseudouridine in RNA. This is an uncharacterized protein from Bacillus subtilis (strain 168).